The chain runs to 776 residues: Venom dipeptidyl peptidase 4 (776 aa).

The first 25 residues, 1–25 (MVPLRSFVLLNSLFLVLLAARTVVT), serve as a signal peptide directing secretion. 3 N-linked (GlcNAc...) asparagine glycosylation sites follow: Asn44, Asn66, and Asn329. Intrachain disulfides connect Cys449-Cys452 and Cys462-Cys480. N-linked (GlcNAc...) asparagine glycosylation is found at Asn504 and Asn577. Ser638 serves as the catalytic Charge relay system. A disulfide bridge links Cys658 with Cys769. Asn688 and Asn693 each carry an N-linked (GlcNAc...) asparagine glycan. Active-site charge relay system residues include Asp717 and His749.

The protein belongs to the peptidase S9B family. DPPIV subfamily. In terms of tissue distribution, expressed by the venom gland.

The protein resides in the secreted. It carries out the reaction Release of an N-terminal dipeptide, Xaa-Yaa-|-Zaa-, from a polypeptide, preferentially when Yaa is Pro, provided Zaa is neither Pro nor hydroxyproline.. With respect to regulation, inhibited by diprotin A. In terms of biological role, venom dipeptidyl-peptidase which removes N-terminal dipeptides sequentially from polypeptides having unsubstituted N-termini provided that the penultimate residue is proline. May process venom proteins into their active forms and/or modulate the chemotactic activity of immune cells after the insect sting. In Vespula vulgaris (Yellow jacket), this protein is Venom dipeptidyl peptidase 4.